Consider the following 238-residue polypeptide: Probable 2-phosphosulfolactate phosphatase (238 aa).

Belongs to the ComB family. Requires Mg(2+) as cofactor.

It carries out the reaction (2R)-O-phospho-3-sulfolactate + H2O = (2R)-3-sulfolactate + phosphate. The protein is Probable 2-phosphosulfolactate phosphatase of Carboxydothermus hydrogenoformans (strain ATCC BAA-161 / DSM 6008 / Z-2901).